A 176-amino-acid chain; its full sequence is RNA pyrophosphohydrolase (176 aa).

The 144-residue stretch at 6-149 (GYRPNVGIVI…KRDVYRRVMK (144 aa)) folds into the Nudix hydrolase domain. The Nudix box motif lies at 38 to 59 (GGINPGESAEQAMYRELFEEVG).

The protein belongs to the Nudix hydrolase family. RppH subfamily. The cofactor is a divalent metal cation.

In terms of biological role, accelerates the degradation of transcripts by removing pyrophosphate from the 5'-end of triphosphorylated RNA, leading to a more labile monophosphorylated state that can stimulate subsequent ribonuclease cleavage. The polypeptide is RNA pyrophosphohydrolase (Klebsiella pneumoniae (strain 342)).